The sequence spans 282 residues: tRNA N(3)-cytidine methyltransferase METTL6 (282 aa).

Residues W45, Y49, G87, D110, D136, L137, and I157 each coordinate S-adenosyl-L-methionine.

Belongs to the methyltransferase superfamily. METL family. In terms of assembly, monomer. Interacts with SARS1/SerRS; interaction is mediated via tRNA(Ser) and is required for N(3)-methylcytidine methylation.

Its subcellular location is the cytoplasm. The protein resides in the nucleus. It carries out the reaction cytidine(32) in tRNA(Ser) + S-adenosyl-L-methionine = N(3)-methylcytidine(32) in tRNA(Ser) + S-adenosyl-L-homocysteine + H(+). In terms of biological role, S-adenosyl-L-methionine-dependent methyltransferase that mediates N(3)-methylcytidine modification of residue 32 of the tRNA anticodon loop of tRNA(Ser), including tRNA(Ser)(UGA) and tRNA(Ser)(GCU). Interaction with SARS1/SerRS is required for N(3)-methylcytidine methylation. This chain is tRNA N(3)-cytidine methyltransferase METTL6 (METTL6), found in Pongo abelii (Sumatran orangutan).